A 619-amino-acid polypeptide reads, in one-letter code: MATRPGPLTEWPWHRLGNFKYVVMAPVVAHGARRVMRNGWGDLDIAFSLILPSLLLRMIHNQIWISLSRYQTARSKHRIVDRGIEFDQVDRERGWDDQILFNGLVFYAGYLAMPSVRRMPVWRTDGAVVTALVHTGPVEFLYYWFHRALHHHFLYSRYHSHHHASIVTEPITSVIHPFAEHVVYFILFAIPILSTIYLGNVSAMGIVGYIAYIDFMNNMGHCNFELVPEWIFQIFPPLKYLIYTPSFHSLHHTQFRTNYSLFMPFYDYIYNTMDKSSDELYESSLKGTEETPDLVHLTHMTNLQSAYHLRIGIASIASKPYSDSAWYMWTLWPLAWLSMVLAWIYGSSAFVVERIKLNKMKMQTWALPRYNFQYGLTWEREPINDLIEKAILDADMKGVKVISLGLLNQAKQLNGNGELFRQKYPKLGVRIIDGSGLATAVVLKSIPSDAKKVFLRTGTSKIARAIAIALCDRGVQVIMNEKEVYHMLKSQIPENRASYLKLSSDNVPQLWIVHNIDDNEQKMAPKGTIFIPISQFPLKKLRKDCTYMSTPAMRIPEEMKNIHSCENWLPRRVMSAWHIAGILHALEGWNMHECGDEMMDIEKSWSAAIRHGFLPLTKA.

Helical transmembrane passes span 45 to 65, 94 to 114, 126 to 146, 178 to 198, and 325 to 345; these read IAFSLILPSLLLRMIHNQIWI, GWDDQILFNGLVFYAGYLAMP, GAVVTALVHTGPVEFLYYWFH, FAEHVVYFILFAIPILSTIYL, and AWYMWTLWPLAWLSMVLAWIY. The Fatty acid hydroxylase domain occupies 138-272; the sequence is VEFLYYWFHR…MPFYDYIYNT (135 aa).

This sequence belongs to the sterol desaturase family. In terms of assembly, homodimer. Expressed ubiquitously at low levels, with higher accumulation in developing panicles, shoots and flag leaves.

The protein resides in the endoplasmic reticulum membrane. The enzyme catalyses a long-chain fatty aldehyde + 2 NADPH + O2 + H(+) = a long-chain alkane + formate + 2 NADP(+) + H2O. Functionally, aldehyde decarbonylase involved in the conversion of aldehydes to alkanes. Core component of a very-long-chain alkane synthesis complex. In Oryza sativa subsp. japonica (Rice), this protein is Very-long-chain aldehyde decarbonylase GL1-4.